We begin with the raw amino-acid sequence, 240 residues long: Uridylate kinase (240 aa).

12–15 (KLSG) lines the ATP pocket. A UMP-binding site is contributed by G54. Positions 55 and 59 each coordinate ATP. UMP is bound by residues D74 and 135-142 (TGNPFFTT). Residues T162, Y168, and D171 each contribute to the ATP site.

It belongs to the UMP kinase family. Homohexamer.

It is found in the cytoplasm. It carries out the reaction UMP + ATP = UDP + ADP. The protein operates within pyrimidine metabolism; CTP biosynthesis via de novo pathway; UDP from UMP (UMPK route): step 1/1. Inhibited by UTP. Functionally, catalyzes the reversible phosphorylation of UMP to UDP. The chain is Uridylate kinase from Xanthomonas oryzae pv. oryzae (strain KACC10331 / KXO85).